A 58-amino-acid polypeptide reads, in one-letter code: Galectin-1 (58 aa).

One can recognise a Galectin domain in the interval 2–58 (GITXTSLHVAPGARLAVKGDIPAGAKSWVINLGKGENDIMLHFNARFDAHGDIRTIV). A beta-D-galactoside contacts are provided by residues 43–47 (HFNAR) and His51.

Monomer. Detected in most tissues, most abundantly in skin.

It is found in the secreted. The protein localises to the extracellular space. The protein resides in the extracellular matrix. Its function is as follows. May regulate cell apoptosis and cell differentiation. Binds beta-galactoside and a wide array of complex carbohydrates. The protein is Galectin-1 of Podarcis hispanicus (Iberian wall lizard).